A 349-amino-acid polypeptide reads, in one-letter code: Probable tRNA pseudouridine synthase B (349 aa).

Catalysis depends on Asp41, which acts as the Nucleophile. One can recognise a PUA domain in the interval 207–279 (YPKVIVKETA…KVIDIDNVLI (73 aa)). Residues 300 to 309 (IPVQKPERKL) are compositionally biased toward basic and acidic residues. Residues 300 to 349 (IPVQKPERKLHGNLQGSQEWKDTGNRGNPKRGGTGSKGFSSGFRKRKAKR) are disordered.

This sequence belongs to the pseudouridine synthase TruB family. Type 2 subfamily.

The catalysed reaction is uridine(55) in tRNA = pseudouridine(55) in tRNA. In terms of biological role, could be responsible for synthesis of pseudouridine from uracil-55 in the psi GC loop of transfer RNAs. The protein is Probable tRNA pseudouridine synthase B of Picrophilus torridus (strain ATCC 700027 / DSM 9790 / JCM 10055 / NBRC 100828 / KAW 2/3).